The chain runs to 619 residues: Dynein axonemal intermediate chain 2 (619 aa).

WD repeat units lie at residues 214 to 254 (KPSS…LVAE), 261 to 302 (SHRD…EPTE), 362 to 401 (GHHG…SSIM), 405 to 445 (YHMA…CDPA), and 450 to 489 (VCDD…STLQ). A disordered region spans residues 566–619 (EALKKKPKPKKASIEVEGEDELEDIAGEEEESGIIMGEDTGEDDMDEKNEGGAP). Positions 581-597 (VEGEDELEDIAGEEEES) are enriched in acidic residues.

It belongs to the dynein intermediate chain family. As to quaternary structure, consists of at least two heavy chains and a number of intermediate and light chains. Interacts with DNAAF2. Interacts with DNAAF6/PIH1D3. Interacts with HEATR2; probably involved in outer arm dynein assembly. Interacts with CFAP53.

The protein resides in the cytoplasm. It is found in the cytoskeleton. Its subcellular location is the cilium axoneme. It localises to the dynein axonemal particle. Functionally, part of the dynein complex of respiratory cilia. The polypeptide is Dynein axonemal intermediate chain 2 (Dnai2) (Rattus norvegicus (Rat)).